The following is a 361-amino-acid chain: Phospho-N-acetylmuramoyl-pentapeptide-transferase (361 aa).

A run of 10 helical transmembrane segments spans residues 28–48 (LAII…IEFL), 74–94 (TMGG…LADL), 99–119 (IWIT…DDYA), 133–153 (SKLL…EYLD), 168–188 (LSLD…VGSS), 203–223 (VPIA…GNLI), 236–256 (TGEL…FLWF), 263–283 (VFMG…ISVI), 288–308 (IVLA…ILQV), and 338–358 (KVVI…LSSL).

This sequence belongs to the glycosyltransferase 4 family. MraY subfamily. Requires Mg(2+) as cofactor.

It localises to the cell membrane. The enzyme catalyses UDP-N-acetyl-alpha-D-muramoyl-L-alanyl-gamma-D-glutamyl-meso-2,6-diaminopimeloyl-D-alanyl-D-alanine + di-trans,octa-cis-undecaprenyl phosphate = di-trans,octa-cis-undecaprenyl diphospho-N-acetyl-alpha-D-muramoyl-L-alanyl-D-glutamyl-meso-2,6-diaminopimeloyl-D-alanyl-D-alanine + UMP. It functions in the pathway cell wall biogenesis; peptidoglycan biosynthesis. Its function is as follows. Catalyzes the initial step of the lipid cycle reactions in the biosynthesis of the cell wall peptidoglycan: transfers peptidoglycan precursor phospho-MurNAc-pentapeptide from UDP-MurNAc-pentapeptide onto the lipid carrier undecaprenyl phosphate, yielding undecaprenyl-pyrophosphoryl-MurNAc-pentapeptide, known as lipid I. In Rickettsia rickettsii, this protein is Phospho-N-acetylmuramoyl-pentapeptide-transferase.